A 131-amino-acid chain; its full sequence is uncharacterized protein (131 aa).

This is an uncharacterized protein from Bacillus subtilis (strain 168).